A 112-amino-acid chain; its full sequence is Putative transposase YkgN (112 aa).

This sequence belongs to the transposase 8 family.

This Escherichia coli (strain K12) protein is Putative transposase YkgN (ykgN).